The primary structure comprises 330 residues: MKKSYIEKQQQISFVKAHFSRQLEQRLGLIEVQAPILSRLGDGTQDNLSGHEKAVQVKVKNLPQDAFEVVHSLAKWKRKTLGMYDFAPGEGLYTHMKALRPDEDRLSAIHSVYVDQWDWERVMGDGERTPAYLQETVRHIYAAMKTTEAEVCAQYGLTPFLPAEIHFIHSEALLRRYPDLDAKGRERAITHELGAVFLIGIGGRLSNGQAHDVRAPDYDDWTSLGAEGFGGLNGDILVWNPVLGDAFELSSMGIRVDAKALKRQLALTDDEDRLALEWHQSLLRGDMPQTIGGGIGQSRLVMLLLQQQHIGQVQCGVWPQEIRQRVQAIL.

Belongs to the class-II aminoacyl-tRNA synthetase family. AsnA subfamily.

Its subcellular location is the cytoplasm. The catalysed reaction is L-aspartate + NH4(+) + ATP = L-asparagine + AMP + diphosphate + H(+). It participates in amino-acid biosynthesis; L-asparagine biosynthesis; L-asparagine from L-aspartate (ammonia route): step 1/1. This Edwardsiella ictaluri (strain 93-146) protein is Aspartate--ammonia ligase.